Reading from the N-terminus, the 718-residue chain is NF-kappa-B inhibitor zeta (718 aa).

Over residues 1 to 17 the composition is skewed to basic and acidic residues; sequence MIVDKLLDDSRGGEGLR. Disordered regions lie at residues 1–20 and 58–108; these read MIVD…RDAA and SAPG…RQQR. Positions 58–83 are enriched in low complexity; that stretch reads SAPGSPGSDSSDFSSASSVSSCGAVE. The span at 84 to 97 shows a compositional bias: basic and acidic residues; that stretch reads SRSRGGARAERQPV. In terms of domain architecture, OCA spans 108-130; it reads RGPFQGVRVKNSVKELLLHIRSH. The short motif at 164-179 is the Nuclear localization signal element; it reads KRKGPDSLSDGPACKR. The tract at residues 186 to 211 is disordered; it reads QFLTPPQTPTPGESMEDVHLNEPKQE. Over residues 201 to 211 the composition is skewed to basic and acidic residues; that stretch reads EDVHLNEPKQE. The required for transcriptional activity stretch occupies residues 321–394; the sequence is AYEPNLFDGP…MVGHEMASDS (74 aa). The segment at 404-718 is interaction with NFKB1/p50; that stretch reads MGNPMNTTQL…KSIQQRAPPY (315 aa). ANK repeat units follow at residues 443-472, 479-508, 512-541, 551-580, 582-607, 612-641, and 648-681; these read DGDT…ALHM, NGQS…QVNT, WGRT…GSNQ, DGLT…HSPE, QELL…AVEA, SGRT…CLSF, and NGNT…DPST.

As to quaternary structure, interacts with NFKB1/p50. Interacts with RELA. Interacts with AKIRIN2. In terms of tissue distribution, expressed at high levels in peripheral blood leukocytes and lung, at moderate levels in liver, placenta, and at low levels in spleen, kidney, skeletal muscle and heart.

It is found in the nucleus. Functionally, involved in regulation of NF-kappa-B transcription factor complexes. Inhibits NF-kappa-B activity without affecting its nuclear translocation upon stimulation. Inhibits DNA-binding of RELA and NFKB1/p50, and of the NF-kappa-B p65-p50 heterodimer and the NF-kappa-B p50-p50 homodimer. Also seems to activate NF-kappa-B-mediated transcription. In vitro, upon association with NFKB1/p50 has transcriptional activation activity and, together with NFKB1/p50 and RELA, is recruited to LCN2 promoters. Promotes transcription of LCN2 and DEFB4. Is recruited to IL-6 promoters and activates IL-6 but decreases TNF-alpha production in response to LPS. Seems to be involved in the induction of inflammatory genes activated through TLR/IL-1 receptor signaling. Involved in the induction of T helper 17 cells (Th17) differentiation upon recognition of antigen by T cell antigen receptor (TCR). The protein is NF-kappa-B inhibitor zeta (NFKBIZ) of Homo sapiens (Human).